The sequence spans 87 residues: UPF0248 protein TON_0940 (87 aa).

The protein belongs to the UPF0248 family.

The chain is UPF0248 protein TON_0940 from Thermococcus onnurineus (strain NA1).